The sequence spans 437 residues: Phosphoethanolamine N-methyltransferase 2 (437 aa).

N-methylethanolamine phosphate is bound by residues 186–187 and Tyr-195; that span reads QY. S-adenosyl-L-homocysteine contacts are provided by residues 204–205, Gly-232, Asp-254, 281–282, and Arg-298; these read IS and DA. N-methylethanolamine phosphate is bound by residues Tyr-329, Tyr-343, 347 to 349, and Lys-415; that span reads RAY.

It belongs to the class I-like SAM-binding methyltransferase superfamily.

It carries out the reaction N-methylethanolamine phosphate + S-adenosyl-L-methionine = N,N-dimethylethanolamine phosphate + S-adenosyl-L-homocysteine + H(+). It catalyses the reaction N,N-dimethylethanolamine phosphate + S-adenosyl-L-methionine = phosphocholine + S-adenosyl-L-homocysteine + H(+). Its pathway is phospholipid metabolism; phosphatidylcholine biosynthesis; phosphocholine from phosphoethanolamine. With respect to regulation, feedback inhibition by phosphatidylcholine and also by S-adenosylhomocysteine. Functionally, catalyzes the last two methylation reactions in the synthesis of phosphocholine, by converting phospho-monomethylethanolamine (N-methylethanolamine phosphate) into phospho-dimethylethanolamine (N,N-dimethylethanolamine phosphate) and the latter into phosphocholine. Phosphocholine is a precursor for phosphatidylcholine, a major component in membranes and a precursor itself in the production of glycoconjugates secreted by parasitic nematodes to avoid host immune responses. The chain is Phosphoethanolamine N-methyltransferase 2 from Caenorhabditis elegans.